Here is a 224-residue protein sequence, read N- to C-terminus: Ribose-5-phosphate isomerase A (224 aa).

Substrate-binding positions include 32 to 35, 85 to 88, and 98 to 101; these read TGST, DGAD, and KGGG. Glu-107 (proton acceptor) is an active-site residue. Residue Lys-125 participates in substrate binding.

It belongs to the ribose 5-phosphate isomerase family. Homodimer.

The catalysed reaction is aldehydo-D-ribose 5-phosphate = D-ribulose 5-phosphate. Its pathway is carbohydrate degradation; pentose phosphate pathway; D-ribose 5-phosphate from D-ribulose 5-phosphate (non-oxidative stage): step 1/1. Functionally, catalyzes the reversible conversion of ribose-5-phosphate to ribulose 5-phosphate. This Pseudomonas putida (strain GB-1) protein is Ribose-5-phosphate isomerase A.